Here is a 531-residue protein sequence, read N- to C-terminus: Phosphoinositide phospholipase C 9 (531 aa).

The PI-PLC X-box domain occupies 107–253; it reads RDMNAPLSHY…LQNKILISRR (147 aa). Positions 265–385 constitute a PI-PLC Y-box domain; it reads ENGVELEIQE…GYVKKPNFLL (121 aa). Ser-276 bears the Phosphoserine mark. In terms of domain architecture, C2 spans 386–513; it reads NAGSSGVFYP…EGIRAVPLYD (128 aa).

It depends on Ca(2+) as a cofactor. Expressed in leaves, roots, flowers and siliques.

It localises to the cell membrane. The catalysed reaction is a 1,2-diacyl-sn-glycero-3-phospho-(1D-myo-inositol-4,5-bisphosphate) + H2O = 1D-myo-inositol 1,4,5-trisphosphate + a 1,2-diacyl-sn-glycerol + H(+). In terms of biological role, the production of the second messenger molecules diacylglycerol (DAG) and inositol 1,4,5-trisphosphate (IP3) is mediated by activated phosphatidylinositol-specific phospholipase C enzymes. This Arabidopsis thaliana (Mouse-ear cress) protein is Phosphoinositide phospholipase C 9 (PLC9).